The sequence spans 520 residues: FAD-linked oxidoreductase OXR2 (520 aa).

Positions 1-23 are cleaved as a signal peptide; it reads MKSFSLLASAGLATLASLPLTMA. Residues N77, N220, N378, and N390 are each glycosylated (N-linked (GlcNAc...) asparagine). Positions 79–251 constitute an FAD-binding PCMH-type domain; that stretch reads SRPTIRLVVV…TSFQSKIYPR (173 aa).

The protein belongs to the oxygen-dependent FAD-linked oxidoreductase family. Requires FAD as cofactor.

Its pathway is polyketide biosynthesis. FAD-linked oxidoreductase; part of the gene cluster that mediates the biosynthesis of pyriculol and pyriculariol, two heptaketides that induce lesion formation upon application on rice leaves but are dispensable for pathogenicity. The highly reducing polyketide synthase synthesizes the heptaketide backbone of pyriculol and pyriculariol. Pyriculol and pyriculariol contain several hydroxyl moieties and double bonds, so it can be assumed that several reduction steps occur during biosynthesis. These reactions could be executed by PKS19 itself or partly by the tailoring enzymes OXR1, OXR2, RED1, RED2 or RED3, identified within the cluster. The FAD-linked oxidoreductase OXR1 is the only tailoring enzyme for which the function has been determined yet, and is involved in the oxidation of dihydropyriculol and dihydropyriculariol into pyriculol and pyriculariol, respectively. In Pyricularia oryzae (strain 70-15 / ATCC MYA-4617 / FGSC 8958) (Rice blast fungus), this protein is FAD-linked oxidoreductase OXR2.